The following is a 64-amino-acid chain: Alpha-mammal toxin AnCra1 (64 aa).

In terms of domain architecture, LCN-type CS-alpha/beta spans 2–64 (KDGYIVDDVN…VRTKGPGRCN (63 aa)). Cystine bridges form between Cys12–Cys63, Cys16–Cys36, Cys22–Cys46, and Cys26–Cys48.

This sequence belongs to the long (4 C-C) scorpion toxin superfamily. Sodium channel inhibitor family. Alpha subfamily. In terms of tissue distribution, expressed by the venom gland.

The protein localises to the secreted. Its function is as follows. Alpha toxins bind voltage-independently at site-3 of sodium channels (Nav) and inhibit the inactivation of the activated channels, thereby blocking neuronal transmission. This toxin is active against mammals. The recombinant toxin selectively inhibits the fast inactivation of hNav1.7/SCN9A channel (EC(50)=136.7 nM). Is potent in inhibiting the fast inactivation of hNav1.7 and has little effect on the steady-state inactivation. In vivo, intravenous injection into mice induces muscle contraction, leading to severe paralysis and death. This chain is Alpha-mammal toxin AnCra1, found in Androctonus crassicauda (Arabian fat-tailed scorpion).